We begin with the raw amino-acid sequence, 94 residues long: Integration host factor subunit beta (94 aa).

It belongs to the bacterial histone-like protein family. Heterodimer of an alpha and a beta chain.

Its function is as follows. This protein is one of the two subunits of integration host factor, a specific DNA-binding protein that functions in genetic recombination as well as in transcriptional and translational control. The sequence is that of Integration host factor subunit beta from Buchnera aphidicola subsp. Acyrthosiphon pisum (strain 5A).